Consider the following 162-residue polypeptide: 2-C-methyl-D-erythritol 2,4-cyclodiphosphate synthase (162 aa).

2 residues coordinate a divalent metal cation: aspartate 10 and histidine 12. Residues 10–12 and 36–37 contribute to the 4-CDP-2-C-methyl-D-erythritol 2-phosphate site; these read DVH and HS. A divalent metal cation is bound at residue histidine 44. Residues 58–60, 63–67, and arginine 144 each bind 4-CDP-2-C-methyl-D-erythritol 2-phosphate; these read DIG and FSDTD.

Belongs to the IspF family. In terms of assembly, homotrimer. The cofactor is a divalent metal cation.

It carries out the reaction 4-CDP-2-C-methyl-D-erythritol 2-phosphate = 2-C-methyl-D-erythritol 2,4-cyclic diphosphate + CMP. Its pathway is isoprenoid biosynthesis; isopentenyl diphosphate biosynthesis via DXP pathway; isopentenyl diphosphate from 1-deoxy-D-xylulose 5-phosphate: step 4/6. Functionally, involved in the biosynthesis of isopentenyl diphosphate (IPP) and dimethylallyl diphosphate (DMAPP), two major building blocks of isoprenoid compounds. Catalyzes the conversion of 4-diphosphocytidyl-2-C-methyl-D-erythritol 2-phosphate (CDP-ME2P) to 2-C-methyl-D-erythritol 2,4-cyclodiphosphate (ME-CPP) with a corresponding release of cytidine 5-monophosphate (CMP). In Burkholderia thailandensis (strain ATCC 700388 / DSM 13276 / CCUG 48851 / CIP 106301 / E264), this protein is 2-C-methyl-D-erythritol 2,4-cyclodiphosphate synthase.